Consider the following 299-residue polypeptide: Protease HtpX homolog (299 aa).

2 consecutive transmembrane segments (helical) span residues 14 to 34 (WLLLLVFFLLLGLVGYGVGYL) and 39 to 59 (GFGGMILALVIGFIYAVTMIF). His143 provides a ligand contact to Zn(2+). The active site involves Glu144. His147 provides a ligand contact to Zn(2+). 2 consecutive transmembrane segments (helical) span residues 153–173 (IRISTIAVALASAITMLAVMA) and 198–218 (IILLIISLIAIILAPLAATLV). Glu227 serves as a coordination point for Zn(2+).

The protein belongs to the peptidase M48B family. The cofactor is Zn(2+).

The protein localises to the cell membrane. In Streptococcus thermophilus (strain CNRZ 1066), this protein is Protease HtpX homolog.